The following is a 687-amino-acid chain: Putative ammonium transporter 3 (687 aa).

11 helical membrane-spanning segments follow: residues 39–59 (AVWI…FGLL), 77–97 (VVDV…FSYG), 134–154 (ASFL…SGAV), 162–182 (SYIL…HWVW), 196–216 (FAGC…ATVF), 240–260 (LGTF…VWGI), 272–292 (AVAT…ISFV), 299–319 (VNFL…ICAV), 323–343 (WHAL…LPLL), 352–372 (VGIV…VGIF), and 404–424 (CTAA…FLIS). Disordered stretches follow at residues 521-544 (RTNA…FNNQ), 549-568 (AVSS…RRTE), and 592-687 (PPEE…NPPV). Over residues 549-564 (AVSSTVSTARNGPSTG) the composition is skewed to polar residues. 2 stretches are compositionally biased toward low complexity: residues 614–632 (SPSS…SPSI) and 648–665 (STAS…KNST).

Belongs to the ammonia transporter channel (TC 1.A.11.2) family.

The protein resides in the membrane. Involved in the uptake of ammonia. The protein is Putative ammonium transporter 3 (amt-3) of Caenorhabditis elegans.